A 131-amino-acid chain; its full sequence is uncharacterized protein (131 aa).

A compositionally biased stretch (low complexity) spans 31-40; the sequence is AAATSRAAPL. The interval 31-131 is disordered; that stretch reads AAATSRAAPL…EAKTEQTKTP (101 aa).

This is an uncharacterized protein from Homo sapiens (Human).